Here is a 377-residue protein sequence, read N- to C-terminus: DNA replication and repair protein RecF (377 aa).

ATP is bound at residue 30–37 (GPNGVGKT).

The protein belongs to the RecF family.

The protein localises to the cytoplasm. Its function is as follows. The RecF protein is involved in DNA metabolism; it is required for DNA replication and normal SOS inducibility. RecF binds preferentially to single-stranded, linear DNA. It also seems to bind ATP. This chain is DNA replication and repair protein RecF, found in Salinispora tropica (strain ATCC BAA-916 / DSM 44818 / JCM 13857 / NBRC 105044 / CNB-440).